Here is a 453-residue protein sequence, read N- to C-terminus: Choline kinase alpha (453 aa).

The tract at residues 22–81 (CGGNAAPTPGVGQQRDAAGELESKQLGGRTQPLALPPPPPPPLPLPPPPSPPLADEQPEP) is disordered. Residues 55-73 (ALPPPPPPPLPLPPPPSPP) show a composition bias toward pro residues. Phosphoserine is present on Ser-71. ATP is bound by residues 113–119 (RGGLSNM), Arg-142, and 203–209 (QFIPSRR). 115 to 117 (GLS) is a binding site for phosphocholine. Lys-243 carries the post-translational modification N6-acetyllysine. Ser-275 carries the post-translational modification Phosphoserine. ATP is bound by residues Gln-304 and Asp-326.

It belongs to the choline/ethanolamine kinase family. As to quaternary structure, homodimer. Heterodimer with CHKB. Monomer; acetylation by KAT5 promotes dissociation of the homodimer and monomerization. Post-translationally, phosphorylated at Ser-275 by AMPK in response to glucose deprivation, leading to localization to lipid droplets. In terms of processing, acetylated by KAT5 at Lys-243 following phosphorylation by AMPK, leading to monomerization and conversion into a tyrosine-protein kinase. Expressed ubiquitously with the highest level in testis.

Its subcellular location is the cytoplasm. The protein localises to the cytosol. It is found in the lipid droplet. The catalysed reaction is choline + ATP = phosphocholine + ADP + H(+). The enzyme catalyses ethanolamine + ATP = phosphoethanolamine + ADP + H(+). It carries out the reaction L-tyrosyl-[protein] + ATP = O-phospho-L-tyrosyl-[protein] + ADP + H(+). Its pathway is phospholipid metabolism; phosphatidylcholine biosynthesis; phosphocholine from choline: step 1/1. The protein operates within phospholipid metabolism; phosphatidylethanolamine biosynthesis; phosphatidylethanolamine from ethanolamine: step 1/3. Functionally, plays a key role in phospholipid biosynthesis by catalyzing the phosphorylation of free choline to phosphocholine, the first step in phosphatidylcholine biosynthesis. Also phosphorylates ethanolamine, thereby contributing to phosphatidylethanolamine biosynthesis. Has higher activity with choline. Its function is as follows. This isoform plays a key role in lipolysis of lipid droplets following glucose deprivation. In response to glucose deprivation, phosphorylated by AMPK, promoting localization to lipid droplets. Phosphorylation is followed by acetylation by KAT5, leading to dissociation of the homodimer into a monomer. Monomeric CHKA isoform 1 is converted into a tyrosine-protein kinase, which phosphorylates lipid droplet structural proteins PLIN2 and PLIN3, leading to lipolysis of lipid droplets. The polypeptide is Choline kinase alpha (Chka) (Mus musculus (Mouse)).